The following is a 45-amino-acid chain: Protein PsbN (45 aa).

Residues 12 to 30 traverse the membrane as a helical segment; that stretch reads FLSRSLVSFTGYALYTAFG.

Belongs to the PsbN family.

The protein localises to the plastid. Its subcellular location is the chloroplast thylakoid membrane. Its function is as follows. May play a role in photosystem I and II biogenesis. The chain is Protein PsbN from Adiantum capillus-veneris (Maidenhair fern).